A 170-amino-acid chain; its full sequence is uncharacterized protein (170 aa).

The stretch at 15 to 81 (EAFDEKAEKE…EREKSKSAVS (67 aa)) forms a coiled coil. Basic and acidic residues predominate over residues 20-77 (KAEKEKVEKEKALKEKTEKEKAEKEKAEKEKVEKEKAEKEKAAKEKAAKEKAEREKSK). The disordered stretch occupies residues 20–95 (KAEKEKVEKE…NQNSNKGNVE (76 aa)). The segment covering 78 to 92 (SAVSPATTNQNSNKG) has biased composition (polar residues). The chain crosses the membrane as a helical span at residues 98 to 118 (VAIGVLAGGAVTGVAVGGAYL).

The protein localises to the membrane. This is an uncharacterized protein from Dictyostelium discoideum (Social amoeba).